The sequence spans 363 residues: Protein RecA (363 aa).

79–86 contacts ATP; the sequence is GPESSGKT.

Belongs to the RecA family.

Its subcellular location is the cytoplasm. Functionally, can catalyze the hydrolysis of ATP in the presence of single-stranded DNA, the ATP-dependent uptake of single-stranded DNA by duplex DNA, and the ATP-dependent hybridization of homologous single-stranded DNAs. It interacts with LexA causing its activation and leading to its autocatalytic cleavage. The chain is Protein RecA from Methylobacterium radiotolerans (strain ATCC 27329 / DSM 1819 / JCM 2831 / NBRC 15690 / NCIMB 10815 / 0-1).